The following is a 385-amino-acid chain: Multidrug export protein AcrE (385 aa).

A signal peptide spans 1 to 23; it reads MTKHARFFLLPSFILISAALIAG. Residue C24 is the site of N-palmitoyl cysteine attachment. A lipid anchor (S-diacylglycerol cysteine) is attached at C24. The interval 366–385 is disordered; that stretch reads ARPGEQVKATTDTPADTASK. Positions 373 to 385 are enriched in polar residues; the sequence is KATTDTPADTASK.

Belongs to the membrane fusion protein (MFP) (TC 8.A.1) family. In terms of assembly, part of the tripartite efflux system AcrEF-TolC, which is composed of an inner membrane transporter, AcrF, a periplasmic membrane fusion protein, AcrE, and an outer membrane component, TolC. The complex forms a large protein conduit and can translocate molecules across both the inner and outer membranes.

The protein localises to the cell inner membrane. Its function is as follows. Part of the tripartite efflux system AcrEF-TolC. Involved in the efflux of indole and organic solvents. The protein is Multidrug export protein AcrE (acrE) of Escherichia coli (strain K12).